A 516-amino-acid polypeptide reads, in one-letter code: MGSIDNLTAQKLTSSQFPMNTLEPEEFRRQGHLMIDFLADYYRKVENYPVRSQVSPGYLREILPESAPYNPESLETILQDVQTKIIPGITHWQSPNFFAYFPSSGSTAGFLGEMLSTGFNVVGFNWMVSPAATELENVVTDWFGKMLQLPKSFLFSGGGGGVLQGTTCEAILCTLVAARDKNLRQHGMDNIGKLVVYCSDQTHSALQKAAKIAGIDPKNFRAIETTKSSNFKLCPKRLESAILYDLQNGLIPLYLCATVGTTSSTTVDPLPALTEVAKKYDLWVHVDAAYAGSACICPEFRQYLDGVENADSFSLNAHKWFLTTLDCCCLWVRDPSALIKSLSTYPEFLKNNASETNKVVDYKDWQIMLSRRFRALKLWFVLRSYGVGQLREFIRGHVGMAKYFEGLVGLDKRFEVVAPRLFSMVCFRIKPSAMIGKNDENEVNEINRKLLESVNDSGRIYVSHTVLGGIYVIRFAIGGTLTDINHVSAAWKVLQDHADALLDDAFLPKKIVNILS.

Lysine 319 bears the N6-(pyridoxal phosphate)lysine mark.

This sequence belongs to the group II decarboxylase family. In terms of assembly, homodimer. Pyridoxal 5'-phosphate is required as a cofactor.

The catalysed reaction is L-tyrosine + H(+) = tyramine + CO2. This chain is Tyrosine decarboxylase 3 (TYRDC-3), found in Petroselinum crispum (Parsley).